Here is a 138-residue protein sequence, read N- to C-terminus: Small ribosomal subunit protein uS8c (138 aa).

The protein belongs to the universal ribosomal protein uS8 family. Part of the 30S ribosomal subunit.

Its subcellular location is the plastid. The protein resides in the chloroplast. Its function is as follows. One of the primary rRNA binding proteins, it binds directly to 16S rRNA central domain where it helps coordinate assembly of the platform of the 30S subunit. This chain is Small ribosomal subunit protein uS8c (rps8), found in Oenothera elata subsp. hookeri (Hooker's evening primrose).